Consider the following 350-residue polypeptide: Ribosomal RNA large subunit methyltransferase M (350 aa).

S-adenosyl-L-methionine is bound by residues 217–220 (APGG), Asp236, Asp256, and Asp272. The active-site Proton acceptor is the Lys301.

The protein belongs to the class I-like SAM-binding methyltransferase superfamily. RNA methyltransferase RlmE family. RlmM subfamily. As to quaternary structure, monomer.

It localises to the cytoplasm. The catalysed reaction is cytidine(2498) in 23S rRNA + S-adenosyl-L-methionine = 2'-O-methylcytidine(2498) in 23S rRNA + S-adenosyl-L-homocysteine + H(+). In terms of biological role, catalyzes the 2'-O-methylation at nucleotide C2498 in 23S rRNA. The chain is Ribosomal RNA large subunit methyltransferase M from Cellvibrio japonicus (strain Ueda107) (Pseudomonas fluorescens subsp. cellulosa).